The following is a 140-amino-acid chain: Large ribosomal subunit protein uL16 (140 aa).

It belongs to the universal ribosomal protein uL16 family. In terms of assembly, part of the 50S ribosomal subunit.

Functionally, binds 23S rRNA and is also seen to make contacts with the A and possibly P site tRNAs. The chain is Large ribosomal subunit protein uL16 from Phytoplasma australiense.